We begin with the raw amino-acid sequence, 373 residues long: Ras association domain-containing protein 7 (373 aa).

The 84-residue stretch at 6–89 (AAMELKVWVD…VQFVLRRTGP (84 aa)) folds into the Ras-associating domain. The disordered stretch occupies residues 122–150 (CEPRKTLTPEPAPSLSRPGPAAPVTPTPG). Coiled coils occupy residues 175–227 (WEQE…AAEA) and 248–297 (QERQ…QFIQ). Positions 300–356 (GAALPPPPRPDRGPPGTQGPLPPAREESLLGAPSESHAGAQPRPRGGPHDAELLEVA) are disordered.

Interacts with MAP2K7 and GTP-bound NRAS. Post-translationally, polyubiquitinated and degraded by the proteasome upon prolonged stress stimuli.

The protein localises to the cytoplasm. The protein resides in the cytoskeleton. It localises to the microtubule organizing center. It is found in the centrosome. In terms of biological role, negatively regulates stress-induced JNK activation and apoptosis by promoting MAP2K7 phosphorylation and inhibiting its ability to activate JNK. Following prolonged stress, anti-apoptotic effect stops because of degradation of RASSF7 protein via the ubiquitin-proteasome pathway. Required for the activation of AURKB and chromosomal congression during mitosis where it stimulates microtubule polymerization. The sequence is that of Ras association domain-containing protein 7 (RASSF7) from Homo sapiens (Human).